The sequence spans 1220 residues: Plasma membrane calcium-transporting ATPase 1 (1220 aa).

Residue G2 is modified to N-acetylglycine. At 2–105 (GDMANNSVAY…KTFLQLVWEA (104 aa)) the chain is on the cytoplasmic side. Phosphoserine is present on residues S8 and S17. The helical transmembrane segment at 106-126 (LQDVTLIILEIAAIVSLGLSF) threads the bilayer. The Extracellular segment spans residues 127-154 (YQPPEGDNALCGEVSVGEEEGEGETGWI). The chain crosses the membrane as a helical span at residues 155–175 (EGAAILLSVVCVVLVTAFNDW). The Cytoplasmic portion of the chain corresponds to 176–366 (SKEKQFRGLQ…KEKSVLQGKL (191 aa)). Residues 297–356 (EEEKKDEKKKEKKNKKQDGAIENRNKAKAQDGAAMEMQPLKSEEGGDGDEKDKKKANLPK) form a disordered region. Composition is skewed to basic and acidic residues over residues 312–325 (KQDG…KAKA) and 337–356 (KSEE…NLPK). S338 carries the phosphoserine modification. The helical transmembrane segment at 367-386 (TKLAVQIGKAGLLMSAITVI) threads the bilayer. Residues 387-418 (ILVLYFVIDTFWVQKRPWLAECTPIYIQYFVK) are Extracellular-facing. The helical transmembrane segment at 419-439 (FFIIGVTVLVVAVPEGLPLAV) threads the bilayer. At 440–855 (TISLAYSVKK…RNVYDSISKF (416 aa)) the chain is on the cytoplasmic side. D475 serves as the catalytic 4-aspartylphosphate intermediate. 3 residues coordinate Mg(2+): D475, T477, and D797. Residues 856-876 (LQFQLTVNVVAVIVAFTGACI) traverse the membrane as a helical segment. Residues 877–882 (TQDSPL) lie on the Extracellular side of the membrane. The chain crosses the membrane as a helical span at residues 883–903 (KAVQMLWVNLIMDTLASLALA). Residues 904 to 927 (TEPPTESLLLRKPYGRNKPLISRT) are Cytoplasmic-facing. Residues 928 to 948 (MMKNILGHAFYQLVVVFTLLF) form a helical membrane-spanning segment. Residues 949–971 (AGEKFFDIDSGRNAPLHAPPSEH) lie on the Extracellular side of the membrane. A helical membrane pass occupies residues 972-991 (YTIVFNTFVLMQLFNEINAR). Over 992–1005 (KIHGERNVFEGIFN) the chain is Cytoplasmic. A helical transmembrane segment spans residues 1006–1027 (NAIFCTIVLGTFVVQIIIVQFG). Residues 1028–1039 (GKPFSCSELSIE) are Extracellular-facing. Residues 1040–1060 (QWLWSIFLGMGTLLWGQLIST) traverse the membrane as a helical segment. Residues 1061 to 1220 (IPTSRLKFLK…SPLHSLETSL (160 aa)) are Cytoplasmic-facing. Residues 1100–1117 (LRRGQILWFRGLNRIQTQ) form a calmodulin-binding subdomain A region. T1116 carries the post-translational modification Phosphothreonine; by PKC. Positions 1118 to 1220 (IRVVNAFRSS…SPLHSLETSL (103 aa)) are required for basolateral membrane targeting. A phosphoserine mark is found at S1140 and S1155. The segment at 1160–1220 (PLIDDTDAED…SPLHSLETSL (61 aa)) is disordered. A Phosphothreonine modification is found at T1165. 2 positions are modified to phosphoserine: S1178 and S1182. Over residues 1200 to 1220 (MNKSATSSSPGSPLHSLETSL) the composition is skewed to polar residues.

This sequence belongs to the cation transport ATPase (P-type) (TC 3.A.3) family. Type IIB subfamily. In terms of assembly, monomer. Dimer. Oligomer. Calmodulin binding. Interacts with PDZD11. Interacts with SLC35G1 and STIM1. Interacts with YWHAE; interacts with the monomeric and dimeric forms of the YWHAE but prefer the monomer form; this interaction inhibits calcium-transporting ATPase activity. Interacts with NPTN; this interaction stabilizes ATP2B1 and increases ATPase activity; this interaction controls T cell calcium homeostasis following T cell activation. Interacts with EPB41; regulates small intestinal calcium absorption through regulation of membrane expression of ATP2B1. In terms of tissue distribution, expressed in the retina, with strongest expression in the outer plexiform layer and lower expression levels in the inner nuclear layer and the inner plexiform layer. Specifically expressed in the following retinal cell types: photoreceptor cells, cone bipolar cells and horizontal cells. Expressed in osteoclasts (at protein level). Expressed at highest levels in brain, intestine, kidney, and stomach, and at lower levels in liver, lung, aorta, portal vein, urinary bladder, diaphragm, seminal vesicles and testes. Expressed in small intestinal epithelium.

The protein localises to the cell membrane. It localises to the basolateral cell membrane. Its subcellular location is the synapse. The protein resides in the presynaptic cell membrane. It is found in the cytoplasmic vesicle. The protein localises to the secretory vesicle. It localises to the synaptic vesicle membrane. It catalyses the reaction Ca(2+)(in) + ATP + H2O = Ca(2+)(out) + ADP + phosphate + H(+). In terms of biological role, catalyzes the hydrolysis of ATP coupled with the transport of calcium from the cytoplasm to the extracellular space thereby maintaining intracellular calcium homeostasis. Plays a role in blood pressure regulation through regulation of intracellular calcium concentration and nitric oxide production leading to regulation of vascular smooth muscle cells vasoconstriction. Positively regulates bone mineralization through absorption of calcium from the intestine. Plays dual roles in osteoclast differentiation and survival by regulating RANKL-induced calcium oscillations in preosteoclasts and mediating calcium extrusion in mature osteoclasts. Regulates insulin sensitivity through calcium/calmodulin signaling pathway by regulating AKT1 activation and NOS3 activation in endothelial cells. May play a role in synaptic transmission by modulating calcium and proton dynamics at the synaptic vesicles. This Mus musculus (Mouse) protein is Plasma membrane calcium-transporting ATPase 1.